The sequence spans 230 residues: Large ribosomal subunit protein uL1 (230 aa).

This sequence belongs to the universal ribosomal protein uL1 family. Part of the 50S ribosomal subunit.

Binds directly to 23S rRNA. The L1 stalk is quite mobile in the ribosome, and is involved in E site tRNA release. Its function is as follows. Protein L1 is also a translational repressor protein, it controls the translation of the L11 operon by binding to its mRNA. This is Large ribosomal subunit protein uL1 from Bifidobacterium adolescentis (strain ATCC 15703 / DSM 20083 / NCTC 11814 / E194a).